We begin with the raw amino-acid sequence, 415 residues long: Serine/threonine transporter SstT (415 aa).

8 consecutive transmembrane segments (helical) span residues 23–43, 47–67, 85–105, 144–164, 181–201, 220–240, 293–313, and 333–353; these read ILIG…AAIA, LGTL…LMLV, ILFL…LFSF, ALLN…GFAL, AVTF…FGLV, LLVL…LLVF, IPLG…VLTL, and VVAS…LLLI.

The protein belongs to the dicarboxylate/amino acid:cation symporter (DAACS) (TC 2.A.23) family.

It localises to the cell inner membrane. It catalyses the reaction L-serine(in) + Na(+)(in) = L-serine(out) + Na(+)(out). The catalysed reaction is L-threonine(in) + Na(+)(in) = L-threonine(out) + Na(+)(out). In terms of biological role, involved in the import of serine and threonine into the cell, with the concomitant import of sodium (symport system). This is Serine/threonine transporter SstT from Klebsiella pneumoniae subsp. pneumoniae (strain ATCC 700721 / MGH 78578).